The sequence spans 684 residues: Zinc finger BED domain-containing protein RICESLEEPER 4 (684 aa).

The BED-type zinc-finger motif lies at 54–113; that stretch reads KRKSAIWEHFTLVDVSDGCKRASCIHCNQSLAYSSGSKNSGTSHLTRHIAEWCRVLKDRQ. Positions 77, 80, 101, and 106 each coordinate Zn(2+). Residues 595–680 form an HATC (Hobo-Ac-Tam3) domain region; it reads ELELYLEEAL…EALLCAKDWL (86 aa).

Homodimer.

It localises to the nucleus. Functionally, transposase-like protein that is essential for plant growth and development. May regulate global gene expression by recruiting other cellular factors. The polypeptide is Zinc finger BED domain-containing protein RICESLEEPER 4 (Oryza sativa subsp. japonica (Rice)).